The chain runs to 1685 residues: Collagen alpha-5(IV) chain (1685 aa).

The signal sequence occupies residues 1–26 (MKLRGVSLAAGLFLLALSLWGQPAEA). A nonhelical region (NC2) region spans residues 27-41 (AACYGCSPGSKCDCS). Residues 42–1456 (GIKGEKGERG…QGPPGPPGTS (1415 aa)) form a triple-helical region region. The segment at 49–1459 (ERGFPGLEGH…PGPPGTSSVA (1411 aa)) is disordered. Positions 52-61 (FPGLEGHPGL) are enriched in low complexity. The span at 62 to 73 (PGFPGPEGPPGP) shows a compositional bias: pro residues. N-linked (GlcNAc...) asparagine glycosylation occurs at Asn-125. Pro residues predominate over residues 188-212 (TGIPGPIGPPGPPGLMGPPGPPGLP). A compositionally biased stretch (low complexity) spans 214–225 (PKGNMGLNFQGP). The span at 246–257 (EQKRPIDVEFQK) shows a compositional bias: basic and acidic residues. A compositionally biased stretch (pro residues) spans 266-281 (RGPPGPPGIRGPPGPP). Basic and acidic residues-rich tracts occupy residues 284 to 305 (EKGE…KDGE) and 324 to 333 (PGRDGEKGQK). Residues 413–430 (PPGISIPGPPGLDGQPGA) are compositionally biased toward low complexity. 4 stretches are compositionally biased toward pro residues: residues 431–445 (PGLP…PHIP), 493–505 (PGQP…PGPP), 620–630 (MGPPGFGPPGP), and 709–727 (PGPP…PGAP). A compositionally biased stretch (low complexity) spans 788 to 797 (RTGLDGLPGP). Composition is skewed to pro residues over residues 848 to 859 (PGPPGLDVPGPP) and 868 to 880 (PGAP…PGSP). 5 stretches are compositionally biased toward low complexity: residues 882–901 (LPGK…MGMM), 912–931 (IPGR…QGQP), 983–999 (YQGL…SGQP), 1010–1026 (NPGL…PGLK), and 1111–1120 (TPGAKGQPGL). Residues 1139 to 1148 (PGNPGLPGEP) show a composition bias toward pro residues. 2 stretches are compositionally biased toward gly residues: residues 1149–1158 (GPVGGGGHPG) and 1202–1211 (GQKGDGGLPG). 2 stretches are compositionally biased toward pro residues: residues 1234–1243 (QGPPGPPGSP) and 1256–1274 (PQGP…PPGL). Low complexity predominate over residues 1295–1308 (LPGLKGDQGPPGLQ). The span at 1353–1362 (IGPPGPPGLP) shows a compositional bias: pro residues. Residues 1461–1685 (GFLITRHSQT…SRCQVCMKRT (225 aa)) form the Collagen IV NC1 domain. 6 disulfides stabilise this stretch: Cys-1476–Cys-1567, Cys-1509–Cys-1564, Cys-1521–Cys-1527, Cys-1586–Cys-1681, Cys-1620–Cys-1678, and Cys-1632–Cys-1638. Met-1549 is covalently cross-linked (S-Lysyl-methionine sulfilimine (Met-Lys) (interchain with K-1667)). Residue Lys-1667 forms an S-Lysyl-methionine sulfilimine (Lys-Met) (interchain with M-1549) linkage.

Belongs to the type IV collagen family. There are six type IV collagen isoforms, alpha 1(IV)-alpha 6(IV), each of which can form a triple helix structure with 2 other chains to generate type IV collagen network. Post-translationally, prolines at the third position of the tripeptide repeating unit (G-X-Y) are hydroxylated in some or all of the chains. In terms of processing, type IV collagens contain numerous cysteine residues which are involved in inter- and intramolecular disulfide bonding. 12 of these, located in the NC1 domain, are conserved in all known type IV collagens. The trimeric structure of the NC1 domains is stabilized by covalent bonds between Lys and Met residues. Isoform 2 is found in kidney.

Its subcellular location is the secreted. The protein resides in the extracellular space. The protein localises to the extracellular matrix. It is found in the basement membrane. Type IV collagen is the major structural component of glomerular basement membranes (GBM), forming a 'chicken-wire' meshwork together with laminins, proteoglycans and entactin/nidogen. The sequence is that of Collagen alpha-5(IV) chain (COL4A5) from Homo sapiens (Human).